We begin with the raw amino-acid sequence, 170 residues long: Large ribosomal subunit protein uL16 (170 aa).

The protein belongs to the universal ribosomal protein uL16 family.

The chain is Large ribosomal subunit protein uL16 from Methanospirillum hungatei JF-1 (strain ATCC 27890 / DSM 864 / NBRC 100397 / JF-1).